The following is a 504-amino-acid chain: ATP synthase subunit beta (504 aa).

181-188 (GGAGVGKT) lines the ATP pocket.

Belongs to the ATPase alpha/beta chains family. As to quaternary structure, F-type ATPases have 2 components, CF(1) - the catalytic core - and CF(0) - the membrane proton channel. CF(1) has five subunits: alpha(3), beta(3), gamma(1), delta(1), epsilon(1). CF(0) has three main subunits: a(1), b(2) and c(9-12). The alpha and beta chains form an alternating ring which encloses part of the gamma chain. CF(1) is attached to CF(0) by a central stalk formed by the gamma and epsilon chains, while a peripheral stalk is formed by the delta and b chains.

Its subcellular location is the cell inner membrane. It carries out the reaction ATP + H2O + 4 H(+)(in) = ADP + phosphate + 5 H(+)(out). Produces ATP from ADP in the presence of a proton gradient across the membrane. The catalytic sites are hosted primarily by the beta subunits. This is ATP synthase subunit beta from Ehrlichia ruminantium (strain Gardel).